We begin with the raw amino-acid sequence, 309 residues long: Phosphoserine phosphatase (309 aa).

The active-site Nucleophile is D97. Mg(2+)-binding residues include D97 and D99. The active-site Proton donor is D99. Residues E106, R142, 186–187, and K232 contribute to the substrate site; that span reads SG. D255 lines the Mg(2+) pocket. N258 lines the substrate pocket.

This sequence belongs to the HAD-like hydrolase superfamily. SerB family. The cofactor is Mg(2+).

It carries out the reaction O-phospho-L-serine + H2O = L-serine + phosphate. The catalysed reaction is O-phospho-D-serine + H2O = D-serine + phosphate. The protein operates within amino-acid biosynthesis; L-serine biosynthesis; L-serine from 3-phospho-D-glycerate: step 3/3. The sequence is that of Phosphoserine phosphatase (SER2) from Saccharomyces cerevisiae (strain ATCC 204508 / S288c) (Baker's yeast).